Reading from the N-terminus, the 85-residue chain is UPF0297 protein lhv_0439 (85 aa).

Belongs to the UPF0297 family.

This chain is UPF0297 protein lhv_0439, found in Lactobacillus helveticus (strain DPC 4571).